The sequence spans 358 residues: Peptide chain release factor 1 (358 aa).

At Q233 the chain carries N5-methylglutamine.

Belongs to the prokaryotic/mitochondrial release factor family. Post-translationally, methylated by PrmC. Methylation increases the termination efficiency of RF1.

The protein resides in the cytoplasm. Its function is as follows. Peptide chain release factor 1 directs the termination of translation in response to the peptide chain termination codons UAG and UAA. This Clostridium botulinum (strain Okra / Type B1) protein is Peptide chain release factor 1.